The chain runs to 447 residues: Na(+)-translocating NADH-quinone reductase subunit A (447 aa).

The protein belongs to the NqrA family. In terms of assembly, composed of six subunits; NqrA, NqrB, NqrC, NqrD, NqrE and NqrF.

It catalyses the reaction a ubiquinone + n Na(+)(in) + NADH + H(+) = a ubiquinol + n Na(+)(out) + NAD(+). Functionally, NQR complex catalyzes the reduction of ubiquinone-1 to ubiquinol by two successive reactions, coupled with the transport of Na(+) ions from the cytoplasm to the periplasm. NqrA to NqrE are probably involved in the second step, the conversion of ubisemiquinone to ubiquinol. This is Na(+)-translocating NADH-quinone reductase subunit A from Yersinia pestis.